The sequence spans 321 residues: Calcium-binding protein LPS1-alpha (321 aa).

EF-hand domains are found at residues 15–49 (DAIE…NWTE), 47–82 (WTEE…STKE), 85–120 (YSSD…IYTK), 121–156 (VVDG…KLPI), 165–200 (EYRE…STKY), 200–233 (YSDK…DGVS), 232–267 (VSKD…IYRQ), and 269–304 (VDFE…NCPY). Ca(2+) contacts are provided by Asp29, Asn31, Asp33, Thr35, Glu40, Asp60, Asn62, Asp64, His66, Glu71, Asp98, Asp100, Asn102, Arg104, Glu109, Asp134, Asp136, Asp138, His140, Glu145, Asp178, Asn180, Asp182, Ser184, Glu189, Asp213, Asn215, Asp217, Arg219, Glu224, Asp245, Asp247, Asn249, Lys251, Glu256, Asp284, Asp286, Tyr288, and Glu293.

In terms of tissue distribution, aboral ectoderm, a squamous epithelium covering the surface of the late stage embryo and larva.

Calcium-binding protein involved in larval development and metamorphosis. Likely to function as calcium buffers mediating the transport of calcium from the sea water to the blastocoel where calcium is required for skeleton formation. The chain is Calcium-binding protein LPS1-alpha from Lytechinus pictus (Painted sea urchin).